Reading from the N-terminus, the 218-residue chain is Serine/threonine-protein phosphatase 1 (218 aa).

Positions 24, 26, 53, and 79 each coordinate Mn(2+). H80 (proton donor) is an active-site residue. A Mn(2+)-binding site is contributed by H187.

Belongs to the PPP phosphatase family. PP-1 subfamily. The cofactor is Mn(2+).

The catalysed reaction is O-phospho-L-seryl-[protein] + H2O = L-seryl-[protein] + phosphate. It carries out the reaction O-phospho-L-threonyl-[protein] + H2O = L-threonyl-[protein] + phosphate. Plays a key role in signaling protein misfolding via the CpxR/CPXA transducing system. It also modulates the phosphorylated status of many phosphoproteins in E.coli, some of which acting as major chaperones. Has been shown, in vitro, to act on Ser, Thr and Tyr-phosphorylated substrates. The protein is Serine/threonine-protein phosphatase 1 (pphA) of Escherichia coli (strain K12).